Here is a 591-residue protein sequence, read N- to C-terminus: ADP-ribosylating toxin CARDS (591 aa).

The tract at residues 1–205 (MPNPVRFVYR…LPTPGIATPV (205 aa)) is mono-ADP ribosyltransferase (mART) domain. Residues 206–256 (HLSIPQAASVADVSEGTSASLSFACPDWSPPSSNGENPLDKCIAEKIDNYN) form an NAD(+)-binding pocket region. A disulfide bond links C230 and C247. Residues 268 to 272 (KELED) carry the KELED motif, involved in host ER trafficking, solvent exposed in the crystal structure motif. The segment at 273–439 (TPVYLRGIKT…QFVTMRAAST (167 aa)) is D2 domain. A D3 domain region spans residues 440–591 (FFVDVQLGWY…ILVKDGFDRF (152 aa)).

This sequence belongs to the bacterial exotoxin subunit A family. As to quaternary structure, monomer. Binds to host (human) pulmonary surfactant-associated protein A1 (SFTPA1), the major mammalian protein component of pulmonary surfactant. Binds to host (human) surface annexin A2 (ANXA2) on the cell surface; anti-ANXA2 antibodies decrease binding to cells. Interacts with cytosolic host (human) NLRP3, which it ADP-ribosylates in vitro. In terms of processing, 8 hours after treatment of HeLa cells with purified protein, a substantial amount is processed to 2 nearly equal-sized fragments. The disulfide bond between Cys-230 and Cys-247 is required to for the toxin to exert its mART and vacuolating activities within target cells, and for protein processing. Acidic pH in the endosome and retrograde transport are required for toxin cleavage, which is required for both toxin activities. Trypsin treatment under mild conditions leads to cleavage at Lys-305 and Lys-307; the 2 proteins fragments remain associated and can be internalized and vacuolate HeLa cells.

The protein localises to the cell membrane. Its subcellular location is the cytoplasm. It localises to the cell surface. The protein resides in the cell projection. It is found in the attachment organelle. The protein localises to the host cytoplasm. Its subcellular location is the host cytosol. It localises to the host endoplasmic reticulum. With respect to regulation, in vitro ADP-ribosylation is enhanced by dithiotheritol. The main virulence factor for this bacteria, a mono-ADP-ribosylating toxin (mART), that transfers the ADP-ribosyl group from NAD(+) to multiple target proteins in vitro. Also elicits cytopathic effects in mammalian cells, such as disorganization and disruption of respiratory epithelial integrity in tracheal epithelium and vacuolization in the cytoplasm of CHO and HeLa cells as well as in mice and baboons. Treatment of mice or baboons with CARDS elicits a response that is consistent with human M.pneumoniae infections and mouse models of both infection and intoxication, suggesting that CARDS toxin is sufficient to cause prolonged inflammatory responses and airway dysfunction. Treatment of baboons with CARDS induces a number of cytokines; G-CSF (40 fold), IL-1Ra (10 fold), IL-6 and IL-8 (333 and 100 fold, respectively), MIP-1a (5 fold), and RANTES (9 fold). Treatment of mice gives a similar response. Binds phosphatidyl choline, dipalmitoylphosphatidylcholine (DPPC) and sphingomyelin via domains D2 plus D3. Its function is as follows. Has at least 2 host receptors SFTPA1 and ANXA2. Internalized by a clathrin-mediated process; protein is rapidly taken up at 37 degrees Celsius. Clathrin-independent or caveolin-dependent endocytosis were not detected. In HeLa cells internalized CARDS trafficks toward the nucleus by retrograde transport from early to late endosomes, then the Golgi apparatus; at 16 hours most toxin is concentrated in the perinuclear region in the host endoplasmic reticulum (ER). Failure to localize to the host ER prevents ADP-ribosylation and vacuolization. An acidic compartment is required to mediate retrotransport and processing of toxin into an N-terminal fragment with mART activity and a C-terminal fragment that is able to induce vacuolization. Functionally, induces the host NLRP3 inflammasome to release interleukin-1 beta (IL-1 beta); IL-1 beta release requires ADP-ribosylation activity and uptake by host macrophages. In the host colocalizes with the NLRP3 inflammasome; ADP-ribosylates NLRP3 in vitro. ADP-ribosylation of NLRP3 may lead to hyperinflammation. The chain is ADP-ribosylating toxin CARDS from Mycoplasma pneumoniae (strain ATCC 29342 / M129 / Subtype 1) (Mycoplasmoides pneumoniae).